A 136-amino-acid polypeptide reads, in one-letter code: Large ribosomal subunit protein uL16 (136 aa).

This sequence belongs to the universal ribosomal protein uL16 family. In terms of assembly, part of the 50S ribosomal subunit.

Binds 23S rRNA and is also seen to make contacts with the A and possibly P site tRNAs. The chain is Large ribosomal subunit protein uL16 from Vesicomyosocius okutanii subsp. Calyptogena okutanii (strain HA).